We begin with the raw amino-acid sequence, 572 residues long: Phosphoglucomutase-1 (572 aa).

Substrate is bound by residues Thr23, Arg27, 126-127 (SH), and Lys140. Catalysis depends on Ser126, which acts as the Phosphoserine intermediate. Ser126 provides a ligand contact to Mg(2+). Positions 308, 310, and 312 each coordinate Mg(2+). Residues 312 to 313 (DR), Thr373, 392 to 394 (EES), Lys405, and Arg527 each bind substrate.

Belongs to the phosphohexose mutase family. It depends on Mg(2+) as a cofactor. Post-translationally, phosphorylated via a calcium-dependent protein kinase. Very rapidly (within 80 ms) dephosphorylated during triggered trichocyst exocytosis. In terms of processing, O-glycosylated with a short chain of mannose residues.

Its subcellular location is the cytoplasm. The enzyme catalyses alpha-D-glucose 1-phosphate = alpha-D-glucose 6-phosphate. In terms of biological role, may be involved in membrane fusion in exocytosis. In Paramecium tetraurelia, this protein is Phosphoglucomutase-1 (pp63-1).